We begin with the raw amino-acid sequence, 585 residues long: Proline--tRNA ligase (585 aa).

It belongs to the class-II aminoacyl-tRNA synthetase family. ProS type 1 subfamily. Homodimer.

Its subcellular location is the cytoplasm. It carries out the reaction tRNA(Pro) + L-proline + ATP = L-prolyl-tRNA(Pro) + AMP + diphosphate. In terms of biological role, catalyzes the attachment of proline to tRNA(Pro) in a two-step reaction: proline is first activated by ATP to form Pro-AMP and then transferred to the acceptor end of tRNA(Pro). As ProRS can inadvertently accommodate and process non-cognate amino acids such as alanine and cysteine, to avoid such errors it has two additional distinct editing activities against alanine. One activity is designated as 'pretransfer' editing and involves the tRNA(Pro)-independent hydrolysis of activated Ala-AMP. The other activity is designated 'posttransfer' editing and involves deacylation of mischarged Ala-tRNA(Pro). The misacylated Cys-tRNA(Pro) is not edited by ProRS. This Cutibacterium acnes (strain DSM 16379 / KPA171202) (Propionibacterium acnes) protein is Proline--tRNA ligase.